The following is a 546-amino-acid chain: Glucose-6-phosphate isomerase (546 aa).

The Proton donor role is filled by glutamate 357. Residues histidine 389 and lysine 509 contribute to the active site.

This sequence belongs to the GPI family.

Its subcellular location is the cytoplasm. It catalyses the reaction alpha-D-glucose 6-phosphate = beta-D-fructose 6-phosphate. The protein operates within carbohydrate biosynthesis; gluconeogenesis. Its pathway is carbohydrate degradation; glycolysis; D-glyceraldehyde 3-phosphate and glycerone phosphate from D-glucose: step 2/4. Catalyzes the reversible isomerization of glucose-6-phosphate to fructose-6-phosphate. This chain is Glucose-6-phosphate isomerase, found in Anaeromyxobacter sp. (strain K).